We begin with the raw amino-acid sequence, 225 residues long: UPF0173 metal-dependent hydrolase Fjoh_2786 (225 aa).

It belongs to the UPF0173 family.

This Flavobacterium johnsoniae (strain ATCC 17061 / DSM 2064 / JCM 8514 / BCRC 14874 / CCUG 350202 / NBRC 14942 / NCIMB 11054 / UW101) (Cytophaga johnsonae) protein is UPF0173 metal-dependent hydrolase Fjoh_2786.